A 101-amino-acid chain; its full sequence is MIQQERLLKVLKAPHISEKATKNAEKGNTIVFKVALDANKVEVANAVQELFEVKVDSVRTVVVKGKTKRHGARMGRRSDWKKAYVTLQEGQSLDFVEGAAE.

It belongs to the universal ribosomal protein uL23 family. Part of the 50S ribosomal subunit. Contacts protein L29, and trigger factor when it is bound to the ribosome.

In terms of biological role, one of the early assembly proteins it binds 23S rRNA. One of the proteins that surrounds the polypeptide exit tunnel on the outside of the ribosome. Forms the main docking site for trigger factor binding to the ribosome. This is Large ribosomal subunit protein uL23 from Haemophilus ducreyi (strain 35000HP / ATCC 700724).